The sequence spans 639 residues: tRNA 5-methylaminomethyl-2-thiouridine biosynthesis bifunctional protein MnmC (639 aa).

Positions M1–A228 are tRNA (mnm(5)s(2)U34)-methyltransferase. The segment at V254–Q639 is FAD-dependent cmnm(5)s(2)U34 oxidoreductase.

In the N-terminal section; belongs to the methyltransferase superfamily. tRNA (mnm(5)s(2)U34)-methyltransferase family. It in the C-terminal section; belongs to the DAO family. FAD is required as a cofactor.

The protein resides in the cytoplasm. The enzyme catalyses 5-aminomethyl-2-thiouridine(34) in tRNA + S-adenosyl-L-methionine = 5-methylaminomethyl-2-thiouridine(34) in tRNA + S-adenosyl-L-homocysteine + H(+). In terms of biological role, catalyzes the last two steps in the biosynthesis of 5-methylaminomethyl-2-thiouridine (mnm(5)s(2)U) at the wobble position (U34) in tRNA. Catalyzes the FAD-dependent demodification of cmnm(5)s(2)U34 to nm(5)s(2)U34, followed by the transfer of a methyl group from S-adenosyl-L-methionine to nm(5)s(2)U34, to form mnm(5)s(2)U34. This Acidovorax sp. (strain JS42) protein is tRNA 5-methylaminomethyl-2-thiouridine biosynthesis bifunctional protein MnmC.